The following is a 260-amino-acid chain: DNA repair protein RecO (260 aa).

The protein belongs to the RecO family.

Functionally, involved in DNA repair and RecF pathway recombination. This chain is DNA repair protein RecO, found in Chlorobaculum parvum (strain DSM 263 / NCIMB 8327) (Chlorobium vibrioforme subsp. thiosulfatophilum).